The following is a 387-amino-acid chain: Cysteine desulfurase IscS (387 aa).

Pyridoxal 5'-phosphate-binding positions include 73–74 (AT), asparagine 155, glutamine 183, and 203–205 (SAH). An N6-(pyridoxal phosphate)lysine modification is found at lysine 206. Pyridoxal 5'-phosphate is bound at residue threonine 241. Cysteine 328 functions as the Cysteine persulfide intermediate in the catalytic mechanism. Cysteine 328 is a binding site for [2Fe-2S] cluster.

It belongs to the class-V pyridoxal-phosphate-dependent aminotransferase family. NifS/IscS subfamily. As to quaternary structure, homodimer. Forms a heterotetramer with IscU, interacts with other sulfur acceptors. The cofactor is pyridoxal 5'-phosphate.

The protein localises to the cytoplasm. The catalysed reaction is (sulfur carrier)-H + L-cysteine = (sulfur carrier)-SH + L-alanine. The protein operates within cofactor biosynthesis; iron-sulfur cluster biosynthesis. Functionally, master enzyme that delivers sulfur to a number of partners involved in Fe-S cluster assembly, tRNA modification or cofactor biosynthesis. Catalyzes the removal of elemental sulfur atoms from cysteine to produce alanine. Functions as a sulfur delivery protein for Fe-S cluster synthesis onto IscU, an Fe-S scaffold assembly protein, as well as other S acceptor proteins. This chain is Cysteine desulfurase IscS, found in Helicobacter pylori (strain P12).